A 1045-amino-acid polypeptide reads, in one-letter code: Desmoglein-1 (1045 aa).

Residues 1–23 form the signal peptide; sequence MNWPFFRTAAVLFIFLVVLEVNS. The propeptide occupies 24-49; it reads EFRIQVRDYNTKNGTIKWHSIRRQKR. Asparagine 36, asparagine 110, and asparagine 180 each carry an N-linked (GlcNAc...) asparagine glycan. 4 Cadherin domains span residues 50–158, 159–270, 271–385, and 386–496; these read EWIK…PVFS, MSTF…PYME, LPSN…GSVF, and RPGS…TDGA. The Extracellular segment spans residues 50 to 546; the sequence is EWIKFAAACR…HPLDNVHFGP (497 aa). Residues 547–567 form a helical membrane-spanning segment; it reads AGIGLLIMGFLVLGLVPFLLM. The Cytoplasmic portion of the chain corresponds to 568–1045; sequence YCDCGGAPGG…TKYSTVQYTK (478 aa). 5 Desmoglein repeat repeats span residues 814–840, 841–870, 871–900, 901–928, and 929–957; these read TYPS…TMTE, SYTT…ERVV, GPIS…ERVI, APNS…ERVI, and RPTS…ERVV. The disordered stretch occupies residues 1019–1045; sequence FSNTLGSASPTTTRSRITKYSTVQYTK. The segment covering 1020–1045 has biased composition (polar residues); sequence SNTLGSASPTTTRSRITKYSTVQYTK.

In terms of assembly, binds to JUP/plakoglobin. Interacts with PKP2. Interacts with DSC3; there is evidence to suggest that the interaction promotes cell-cell adhesion of keratinocytes.

Its subcellular location is the cell membrane. The protein localises to the cell junction. It is found in the desmosome. It localises to the cytoplasm. The protein resides in the nucleus. Its function is as follows. Component of intercellular desmosome junctions. Involved in the interaction of plaque proteins and intermediate filaments mediating cell-cell adhesion. The sequence is that of Desmoglein-1 (DSG1) from Sus scrofa (Pig).